The sequence spans 562 residues: Arginine--tRNA ligase (562 aa).

The 'HIGH' region motif lies at 121–131 (PNIAKPISMGH).

It belongs to the class-I aminoacyl-tRNA synthetase family. Monomer.

Its subcellular location is the cytoplasm. The enzyme catalyses tRNA(Arg) + L-arginine + ATP = L-arginyl-tRNA(Arg) + AMP + diphosphate. This Lactiplantibacillus plantarum (strain ATCC BAA-793 / NCIMB 8826 / WCFS1) (Lactobacillus plantarum) protein is Arginine--tRNA ligase.